Consider the following 173-residue polypeptide: Ribosome maturation factor RimM (173 aa).

A PRC barrel domain is found at 92-165; that stretch reads EGEFYHADLI…RVVIEMPGEI (74 aa).

The protein belongs to the RimM family. In terms of assembly, binds ribosomal protein uS19.

Its subcellular location is the cytoplasm. Functionally, an accessory protein needed during the final step in the assembly of 30S ribosomal subunit, possibly for assembly of the head region. Essential for efficient processing of 16S rRNA. May be needed both before and after RbfA during the maturation of 16S rRNA. It has affinity for free ribosomal 30S subunits but not for 70S ribosomes. In Nitrobacter hamburgensis (strain DSM 10229 / NCIMB 13809 / X14), this protein is Ribosome maturation factor RimM.